The chain runs to 175 residues: Large ribosomal subunit protein uL10 (175 aa).

This sequence belongs to the universal ribosomal protein uL10 family. Part of the ribosomal stalk of the 50S ribosomal subunit. The N-terminus interacts with L11 and the large rRNA to form the base of the stalk. The C-terminus forms an elongated spine to which L12 dimers bind in a sequential fashion forming a multimeric L10(L12)X complex.

Functionally, forms part of the ribosomal stalk, playing a central role in the interaction of the ribosome with GTP-bound translation factors. The sequence is that of Large ribosomal subunit protein uL10 from Xylella fastidiosa (strain M23).